Reading from the N-terminus, the 299-residue chain is Probable endonuclease 4 (299 aa).

Zn(2+) is bound by residues histidine 68, histidine 110, glutamate 145, aspartate 179, histidine 182, histidine 214, aspartate 227, histidine 229, and glutamate 259.

This sequence belongs to the AP endonuclease 2 family. Requires Zn(2+) as cofactor.

It carries out the reaction Endonucleolytic cleavage to 5'-phosphooligonucleotide end-products.. Functionally, endonuclease IV plays a role in DNA repair. It cleaves phosphodiester bonds at apurinic or apyrimidinic (AP) sites, generating a 3'-hydroxyl group and a 5'-terminal sugar phosphate. The chain is Probable endonuclease 4 from Exiguobacterium sibiricum (strain DSM 17290 / CCUG 55495 / CIP 109462 / JCM 13490 / 255-15).